The sequence spans 263 residues: Glutamate racemase (263 aa).

Substrate is bound by residues 13–14 (DS) and 45–46 (YG). The Proton donor/acceptor role is filled by Cys77. Residue 78-79 (NT) participates in substrate binding. The active-site Proton donor/acceptor is Cys185. Residue 186–187 (TH) participates in substrate binding.

The protein belongs to the aspartate/glutamate racemases family.

It carries out the reaction L-glutamate = D-glutamate. The protein operates within cell wall biogenesis; peptidoglycan biosynthesis. Its function is as follows. Provides the (R)-glutamate required for cell wall biosynthesis. The polypeptide is Glutamate racemase (Vibrio vulnificus (strain CMCP6)).